The primary structure comprises 249 residues: Probable transcriptional regulatory protein Psyc_0938 (249 aa).

It belongs to the TACO1 family.

The protein localises to the cytoplasm. In Psychrobacter arcticus (strain DSM 17307 / VKM B-2377 / 273-4), this protein is Probable transcriptional regulatory protein Psyc_0938.